The chain runs to 574 residues: Acyloxyacyl hydrolase (574 aa).

Residues 1–22 form the signal peptide; the sequence is MKFPWKVFKTTLLLLLLSHSLA. The propeptide occupies 23–33; sequence SVPSEDQPGDS. The Saposin B-type domain maps to 36 to 117; that stretch reads HGQSCLGCVV…YALEFCKRGA (82 aa). An important for enzyme activity, localization to cytoplasmic vesicles, and protein stability region spans residues 37 to 69; sequence GQSCLGCVVLVSVIEQLAEVHNSSVQVAMERLC. 8 cysteine pairs are disulfide-bonded: C40/C113, C43/C107, C69/C82, C122/C452, C159/C168, C205/C229, C248/C328, and C375/C458. N58 carries an N-linked (GlcNAc...) asparagine glycan. The interval 172-176 is lipopolysaccharide binding; that stretch reads ELSIK. The Ca(2+) site is built by D183, D185, D187, H189, D204, N206, D207, D209, V212, D222, D226, N228, N230, I232, and E244. A glycan (N-linked (GlcNAc...) asparagine) is linked at N206. S262 is a catalytic residue. N408 and N465 each carry an N-linked (GlcNAc...) asparagine glycan.

In terms of assembly, heterodimer of the large and small subunits; disulfide-linked. It depends on Ca(2+) as a cofactor. Post-translationally, cleaved into a large and a small subunit. In terms of processing, the small subunit is N-glycosylated. Detected in peritoneal macrophages (at protein level). Strongly expressed in kidney cortex, where it may be produced by proximal tubule cells. In liver, expressed at high levels in Kupffer cells. Expressed by dendritic cells. Detected at low levels in alveolar macrophages.

It is found in the secreted. The protein resides in the cytoplasmic vesicle. It carries out the reaction a 3-(acyloxy)acyl derivative of bacterial toxin + H2O = a 3-hydroxyacyl derivative of bacterial toxin + a fatty acid + H(+). Its function is as follows. Removes the secondary (acyloxyacyl-linked) fatty acyl chains from the lipid A region of bacterial lipopolysaccharides (LPS). By breaking down LPS, terminates the host response to bacterial infection and prevents prolonged and damaging inflammatory responses. In peritoneal macrophages, seems to be important for recovery from a state of immune tolerance following infection by Gram-negative bacteria. This is Acyloxyacyl hydrolase from Mus musculus (Mouse).